The chain runs to 1087 residues: DYRK-family kinase pom1 (1087 aa).

4 disordered regions span residues 57-81, 120-182, 238-308, and 336-578; these read CPNR…NTNI, LLRS…SKSF, MAPK…LSTI, and NHSH…PSLS. Residues 62–81 are compositionally biased toward low complexity; sequence SSSSTAADTSPSTNASNTNI. 2 stretches are compositionally biased toward polar residues: residues 132–165 and 246–256; these read KNSP…PSSL and WRHTNFHSTSH. A compositionally biased stretch (low complexity) spans 292 to 307; it reads SGSLTKSSSESKNLST. Residues 336 to 361 are compositionally biased toward polar residues; the sequence is NHSHVGSQTKSHSFATPSVFDNNKPV. Residues 362–373 are compositionally biased toward low complexity; it reads SSDNHNNTTTSS. The span at 397–407 shows a compositional bias: basic and acidic residues; the sequence is VDGHRNHEAKH. Residues 429–442 show a composition bias toward low complexity; that stretch reads RGGFFSRLSFSRSS. Over residues 478 to 488 the composition is skewed to basic residues; it reads NGKKTPTRTKS. Serine 513 is modified (phosphoserine). Residues 527–536 are compositionally biased toward basic and acidic residues; it reads VSREPEKPEE. The span at 555 to 578 shows a compositional bias: polar residues; the sequence is QQRSVSYTPKRSSDTSESLQPSLS. A Protein kinase domain is found at 699–995; the sequence is YEVVDFLGKG…PQQAAQHDFL (297 aa). Residues 705–713 and lysine 728 contribute to the ATP site; that span reads LGKGSFGQV. Aspartate 825 serves as the catalytic Proton acceptor. 2 disordered regions span residues 992 to 1011 and 1017 to 1056; these read HDFL…PARQ and PNIE…LVRS. Positions 1045 to 1055 are enriched in polar residues; sequence EPSNQASNLVR.

The protein belongs to the protein kinase superfamily. CMGC Ser/Thr protein kinase family. MNB/DYRK subfamily. As to quaternary structure, interacts with rga4. Interacts with tea4; this interaction triggers pom1 plasma membrane association. Post-translationally, autophosphorylates at the cell cortex to lower lipid affinity and promote membrane release. Dephosphorylation by dis2, regulated by tea4, triggers membrane association.

The protein localises to the cell tip. It is found in the cell membrane. The catalysed reaction is L-seryl-[protein] + ATP = O-phospho-L-seryl-[protein] + ADP + H(+). It catalyses the reaction L-threonyl-[protein] + ATP = O-phospho-L-threonyl-[protein] + ADP + H(+). It carries out the reaction L-tyrosyl-[protein] + ATP = O-phospho-L-tyrosyl-[protein] + ADP + H(+). Functionally, polarity factor involved in localization of polarized growth and cytokinesis. Forms an intracellular gradient that serves to measure cell length and control mitotic entry. Controls the timing of mitotic commitment by regulating the inhibitory impact of cdr1/cdr2 on wee1 activity. Directly phosphorylates the tail of cdr2 which inhibits cdr2 activation by ssp1. Cdr2 phosphorylation by pom1 also modulates cdr2 association with membranes and inhibits cdr2 interaction with mid1, reducing its clustering ability, possibly via the down-regulation of cdr2 kinase activity. Acts as a negative regulator of mid1 distribution, excluding mid1 from non-growing ends, which prevents division-septum assembly at the cell ends. The pom1 polar gradient also mediates mitotic entry by regulating cdk1. Plays an essential role in proper localization and phosphorylation of a GAP for cdc42, rga4, which ensures bipolar localization of GTP-bound, active cdc42 involved in F-actin formation. Phosphorylates multiple other substrates that function in polarized cell growth, including tea4, mod5, pal1, the Rho GAP rga7, and the Arf GEF syt22. The chain is DYRK-family kinase pom1 from Schizosaccharomyces pombe (strain 972 / ATCC 24843) (Fission yeast).